The following is a 589-amino-acid chain: Netrin-G2 (589 aa).

The N-terminal stretch at 1 to 17 (MLRLLALFLHCLPLVSG) is a signal peptide. 3 cysteine pairs are disulfide-bonded: cysteine 22–cysteine 39, cysteine 61–cysteine 81, and cysteine 69–cysteine 77. Residues 35-286 (EFYACQPKVM…AISNIEVIGR (252 aa)) form the Laminin N-terminal domain. An NGL discriminant loop I region spans residues 69 to 88 (CSHENPYLCSNECDASNPDL). N-linked (GlcNAc...) asparagine glycosylation is found at asparagine 122 and asparagine 128. Cysteine 171 and cysteine 195 are oxidised to a cystine. Residues 201 to 203 (RWA) form an NGL discriminant loop II region. Residues 264-267 (TYVQ) are NGL discriminant loop III. 15 cysteine pairs are disulfide-bonded: cysteine 287/cysteine 296, cysteine 289/cysteine 305, cysteine 307/cysteine 316, cysteine 319/cysteine 344, cysteine 413/cysteine 422, cysteine 415/cysteine 433, cysteine 436/cysteine 445, cysteine 448/cysteine 466, cysteine 469/cysteine 481, cysteine 471/cysteine 487, cysteine 489/cysteine 498, cysteine 501/cysteine 511, cysteine 516/cysteine 529, cysteine 523/cysteine 535, and cysteine 537/cysteine 546. 3 consecutive Laminin EGF-like domains span residues 287–346 (CKCN…ACAA), 413–468 (CECY…VCIE), and 469–513 (CNCN…GCYP). An N-linked (GlcNAc...) asparagine glycan is attached at asparagine 310. N-linked (GlcNAc...) asparagine glycosylation occurs at asparagine 455. N-linked (GlcNAc...) asparagine glycosylation is present at asparagine 482. Glycine 566 carries the GPI-anchor amidated glycine lipid modification. Positions 567 to 589 (IVPRPDTLLGCLLLLGLAARLAC) are cleaved as a propeptide — removed in mature form.

In terms of assembly, interacts with LRRC4. In terms of processing, N-glycosylated. In terms of tissue distribution, expression is restricted primarily to neurons of the CNS, particularly in the cerebral cortex, habenular nucleus and superior colliculus. Low levels in lung, kidney, heart and spleen.

Its subcellular location is the cell membrane. Involved in controlling patterning and neuronal circuit formation at the laminar, cellular, subcellular and synaptic levels. Promotes neurite outgrowth of both axons and dendrites. The polypeptide is Netrin-G2 (Ntng2) (Mus musculus (Mouse)).